A 208-amino-acid chain; its full sequence is Putative ADP-ribose pyrophosphatase YjhB (208 aa).

The Nudix hydrolase domain occupies 69-195; it reads TPKADVRGAV…NTPSQLSMLF (127 aa). The Nudix box signature appears at 100–121; that stretch reads GFCEIGLSPAENVVKEIKEESG. Mg(2+) contacts are provided by E115 and E119.

The protein belongs to the Nudix hydrolase family. The cofactor is Mg(2+). Requires Mn(2+) as cofactor.

Its function is as follows. Probably mediates the hydrolysis of some nucleoside diphosphate derivatives. The protein is Putative ADP-ribose pyrophosphatase YjhB (yjhB) of Bacillus subtilis (strain 168).